An 865-amino-acid chain; its full sequence is MFGRTLALAAVFATTVLSAAASLEECPGYKVSNVRDNGHTLKADLRLAGKACNVYGEDIRQLKLRVEYQTHERLHVIIEDSKEDVYQVPESVFPRPESEENDSASTKSALKFSMTQKPFSFKVTRRATDEVIFDTSNSPLIFESQYLRLRTSLPDEPNLYGLGEHSDPLRLQTEDLVTTLWNRDAFGIPPGTNLYGSHPVYYDHRGRSGTHGVFLLNSNGMDVKVGSEDGDNGKKYLEYNILGGVLDFYFMAGPTPKEVASQYAEVVGLPAMMPYWGFGLHQCRYGYRDAFNVAEVVYNYSQAGIPLETMWTDIDYMDGRKVFTLDSKRFPIDEMRALVEYLHDRNQHYIVMVDPAVSYGDNDAFERGKTQDVFMKSKDGAIYKGAVWPGVTAFPDWFHPGTQDYWNNEFKLFFDPEKGIDIDALWIDMNEASNFCDWPCSDPEGWERDHDLPPAPPPVRPIPRPLPGFPDKLQPGSVRLVKRDGTRLRSKAGLPGRDLIDPPYRIQNEAGSISNKTLNTDLVHANGLVEYDTHNLYGTMLTKYRLGDNLSEWSQYRFSISQILQFAAIYQVPMVGADVCGFGGNVTEELCARWAMLGAFYPFYRNHNDIAGRDQEFYRWESVTEAARTAIGIRYKLLDYIYTAFHRQTQSGDPVLNPLFYIYPEDEDTFAIDLQFFYGDALLVSPVTEEGATSVEIYLPDDIFYDYYTGEPIEGKGDLITMENVPITHIPLHFRGGQIVPMRADSANTTTELRKQPFELVICLDREGNAEGSLYLDDGDSLEQPHTSEINFEYHNGVLKVSGKFDFQNEEALEIKNIFVLGYKQDMNVQDKGNMNKDSQYDARLKKLAIKAKILLTGPSEMTLH.

A signal peptide spans 1 to 21 (MFGRTLALAAVFATTVLSAAA). N-linked (GlcNAc...) asparagine glycosylation is found at Asn101 and Asn299. Residue Asp428 is the Nucleophile of the active site. The active site involves Glu431. The N-linked (GlcNAc...) asparagine glycan is linked to Asn515. The active-site Proton donor is the Asp548. N-linked (GlcNAc...) asparagine glycosylation is found at Asn549, Asn585, and Asn748.

This sequence belongs to the glycosyl hydrolase 31 family.

The protein resides in the secreted. The catalysed reaction is Hydrolysis of terminal, non-reducing (1-&gt;4)-linked alpha-D-glucose residues with release of alpha-D-glucose.. The enzyme catalyses Hydrolysis of terminal, non-reducing beta-D-glucosyl residues with release of beta-D-glucose.. Glucosidase involved in the degradation of cellulosic biomass. Has both alpha- and beta-glucosidase activity. In Arthroderma benhamiae (strain ATCC MYA-4681 / CBS 112371) (Trichophyton mentagrophytes), this protein is Probable alpha/beta-glucosidase ARB_02101.